The following is a 184-amino-acid chain: Ras-related protein O-Krev (184 aa).

10–17 (GSGGVGKS) is a GTP binding site. Residues 32–40 (YDPTIEDSY) carry the Effector region motif. GTP contacts are provided by residues 57 to 61 (DTAGT) and 116 to 119 (NKCD). C181 is modified (cysteine methyl ester). C181 carries the S-geranylgeranyl cysteine lipid modification. Positions 182–184 (TLL) are cleaved as a propeptide — removed in mature form.

Belongs to the small GTPase superfamily. Ras family.

It localises to the cell membrane. It carries out the reaction GTP + H2O = GDP + phosphate + H(+). This Diplobatis ommata (Ocellated electric ray) protein is Ras-related protein O-Krev.